An 835-amino-acid chain; its full sequence is Cell division control protein 48 (835 aa).

Residues 1 to 21 (MGEEHKPLLDASGVDPREEDK) form a disordered region. An ATP-binding site is contributed by 257–263 (PGTGKTL). Residues lysine 305, lysine 322, and lysine 346 each participate in a glycyl lysine isopeptide (Lys-Gly) (interchain with G-Cter in ubiquitin) cross-link. The ATP site is built by asparagine 358 and histidine 394. Residues serine 472 and serine 519 each carry the phosphoserine modification. A Glycyl lysine isopeptide (Lys-Gly) (interchain with G-Cter in ubiquitin) cross-link involves residue lysine 522. Residue 531–536 (GTGKTL) coordinates ATP. Residues lysine 539, lysine 594, and lysine 673 each participate in a glycyl lysine isopeptide (Lys-Gly) (interchain with G-Cter in ubiquitin) cross-link. Residues 720 to 729 (EAEKEVKVEG) are compositionally biased toward basic and acidic residues. The interval 720–746 (EAEKEVKVEGEDVEMTDEGAKAEQEPE) is disordered. Threonine 735 carries the phosphothreonine modification. Serine 770 carries the post-translational modification Phosphoserine. Residues 792 to 835 (SNFNFNDAPLGTTATDNANSNNSAPSGAGAAFGSNAEEDDDLYS) form a disordered region. Residues 802–826 (GTTATDNANSNNSAPSGAGAAFGSN) show a composition bias toward low complexity.

This sequence belongs to the AAA ATPase family. Component of the heterotrimeric CDC48-NPL4-UFD1 ATPase complex. The CDC48-NPL4-UFD1 ATPase complex interacts with the HRD1 ubiquitin ligase complex composed of the E3 ligase HRD1, its cofactors HRD3, USA1 and DER1, substrate recruiting factor YOS9 and CDC48-binding protein UBX2. Interaction between the complexes is mediated by interaction between CDC48-NPL4-UFD1 complex member CDC48 and HRD1 complex member UBX2. Forms a complex composed of CDC48, NPL4, UFD1, UFD2 and SHP1. Forms a complex composed of CDC48, NPL4, UFD1, DOA1, SHP1 and deubiquitinase OTU1; within the complex interacts with DOA1/UFD3 and OTU1 to prevent multiubiquitination of substrates. Interacts with UFD2, to add further ubiquitin moieties; the interaction with UFD2 is prevented by DOA1/UFD3. Forms a complex composed of CDC48, DOA1, deubiquitinase UBP3 and probably BRE5; within the complex interacts with DOA1 and UBP3. Interacts (via C-terminus) with DOA1 (via PUL domain); the interaction is direct. Interacts with NPL4. Interacts with SHP1/UBX1, UBX2, UBX3, UBX4, UBX5, UBX6 and UBX7. Interacts with VMS1; the interaction recruits CDC48 to the mitochondria in response to mitochondrial stress. Component of the ribosome quality control complex (RQC), composed of the E3 ubiquitin ligase RKR1/LTN1, RQC1 and RQC2, as well as CDC48 and its ubiquitin-binding cofactors. RQC forms a stable complex with 60S ribosomal subunits. Interacts with ASE1 and CDC5; the interaction is likely to result in their degradation. Component of the DSCc E3 ligase complexes composed of at least TUL1, DSC2, DSC3, UBX3, CDC48 as well as VLD1 for the vacuole-localized complex or GLD1 for the Golgi/endosome-localized complex.

It is found in the microsome. Its subcellular location is the endoplasmic reticulum. It localises to the cytoplasm. The enzyme catalyses ATP + H2O = ADP + phosphate + H(+). Its activity is regulated as follows. The first ATP-binding region has low ATPase activity. The second ATP-binding region is responsible for ATPase activity. ATP binding to the first ATP-binding region induces intrinsic activity of the second ATP-binding region. While ATP binding to the first ATP-binding region appears to prevent ATP hydrolysis by the second ATP-binding region, ADP-binding to first region promotes the coordinate and cooperative ATPase cycle of the second ATP-binding region. ATP binding to the first ATP-binding region induces a conformational change, promoting the rotation of the first ATP-binding region relative to the second ATP-binding region in the hexamer. Its function is as follows. ATP-dependent chaperone which probably uses the energy provided by ATP hydrolysis to generate mechanical force to unfold substrate proteins, disassemble protein complexes, and disaggregate protein aggregates. By recruiting and promoting the degradation of ubiquitinated proteins, plays a role in the ubiquitin fusion degradation (UFD) pathway. Has a role in the endoplasmic reticulum-associated degradation (ERAD) pathway which mediates the cytoplasmic elimination of misfolded proteins exported from the ER. Required for the proteasome-dependent processing/activation of MGA2 and SPT23 transcription factors leading to the subsequent expression of OLE1. Has an additional role in the turnover of OLE1 where it targets ubiquitinated OLE1 and other proteins to the ERAD. Regulates ubiquitin-mediated mitochondria protein degradation. Involved in spindle disassembly probably by promoting the degradation of spindle assembly factors ASE1 and CDC5 at the end of mitosis. Component of the ribosome quality control complex (RQC), a ribosome-associated complex that mediates ubiquitination and extraction of incompletely synthesized nascent chains for proteasomal degradation. CDC48 may provide the mechanical force that dislodges the polyubiquitinated nascent peptides from the exit channel. Required for ribophagy, a process which relocalizes ribosomal particles into the vacuole for degradation in response to starvation. Component of the DSC E3 ubiquitin ligase complexes that tag proteins present in Golgi, endosome and vacuole membranes and function in protein homeostasis under non-stress conditions and support a role in protein quality control. Substrate initially binds through the attached polyubiquitin chain to UDF1/NPL4 and then moves through the pore of the ATPase rings and is thereby unfolded. Acts on a broad range of even well-folded proteins via ubiquitin-binding and unfolding to initiate substrate processing. Involved in degradation of mislocalized tail-anchored transmembrane proteins extracted from the mitochondrion outer membrane by MSP1 and ubiquitinated by DOA10. The sequence is that of Cell division control protein 48 from Saccharomyces cerevisiae (strain ATCC 204508 / S288c) (Baker's yeast).